A 117-amino-acid chain; its full sequence is Non-specific lipid-transfer protein 2B (117 aa).

Positions 1–25 (MARAQLVLVALVAALLLAGPHTTMA) are cleaved as a signal peptide. Disulfide bonds link Cys-29/Cys-76, Cys-39/Cys-53, Cys-54/Cys-99, and Cys-74/Cys-113.

It belongs to the plant LTP family. Expressed in roots, mesocotyls and developing leaves.

Functionally, plant non-specific lipid-transfer proteins transfer phospholipids as well as galactolipids across membranes. May play a role in wax or cutin deposition in the cell walls of expanding epidermal cells and certain secretory tissues. This Oryza sativa subsp. japonica (Rice) protein is Non-specific lipid-transfer protein 2B (LTP2-B).